The sequence spans 170 residues: Photosystem I assembly protein Ycf3 (170 aa).

3 TPR repeats span residues 35–68 (AFTY…EIDP), 72–105 (SYIL…NPFL), and 120–153 (GEQA…TPGN).

This sequence belongs to the Ycf3 family.

It localises to the plastid. Its subcellular location is the chloroplast thylakoid membrane. Functionally, essential for the assembly of the photosystem I (PSI) complex. May act as a chaperone-like factor to guide the assembly of the PSI subunits. This chain is Photosystem I assembly protein Ycf3, found in Triticum aestivum (Wheat).